Here is a 513-residue protein sequence, read N- to C-terminus: Maturase K (513 aa).

This sequence belongs to the intron maturase 2 family. MatK subfamily.

The protein resides in the plastid. The protein localises to the chloroplast. Usually encoded in the trnK tRNA gene intron. Probably assists in splicing its own and other chloroplast group II introns. This is Maturase K from Typha angustifolia (Narrow leaf cattail).